The following is a 139-amino-acid chain: Nucleoside diphosphate kinase (139 aa).

Residues K10, F58, R86, T92, R103, and N113 each contribute to the ATP site. H116 (pros-phosphohistidine intermediate) is an active-site residue.

This sequence belongs to the NDK family. Homotetramer. It depends on Mg(2+) as a cofactor.

It is found in the cytoplasm. It carries out the reaction a 2'-deoxyribonucleoside 5'-diphosphate + ATP = a 2'-deoxyribonucleoside 5'-triphosphate + ADP. The catalysed reaction is a ribonucleoside 5'-diphosphate + ATP = a ribonucleoside 5'-triphosphate + ADP. Its function is as follows. Major role in the synthesis of nucleoside triphosphates other than ATP. The ATP gamma phosphate is transferred to the NDP beta phosphate via a ping-pong mechanism, using a phosphorylated active-site intermediate. The polypeptide is Nucleoside diphosphate kinase (Oleidesulfovibrio alaskensis (strain ATCC BAA-1058 / DSM 17464 / G20) (Desulfovibrio alaskensis)).